We begin with the raw amino-acid sequence, 121 residues long: Heimdall profilin (121 aa).

Belongs to the Asgard profilin family.

The protein localises to the cytoplasm. The protein resides in the cytoskeleton. In terms of biological role, binds to actin and affects the structure of the cytoskeleton. At high concentrations inhibits spontaneous rabbit actin nucleation. This strongly suggests this archaea has a profilin-regulated actin system, and actin-type genes can be identified in this organism. The protein is Heimdall profilin of Heimdallarchaeota archaeon (strain LC_2).